Consider the following 206-residue polypeptide: 3-isopropylmalate dehydratase small subunit (206 aa).

Belongs to the LeuD family. LeuD type 1 subfamily. As to quaternary structure, heterodimer of LeuC and LeuD.

The enzyme catalyses (2R,3S)-3-isopropylmalate = (2S)-2-isopropylmalate. The protein operates within amino-acid biosynthesis; L-leucine biosynthesis; L-leucine from 3-methyl-2-oxobutanoate: step 2/4. In terms of biological role, catalyzes the isomerization between 2-isopropylmalate and 3-isopropylmalate, via the formation of 2-isopropylmaleate. This chain is 3-isopropylmalate dehydratase small subunit, found in Acidobacterium capsulatum (strain ATCC 51196 / DSM 11244 / BCRC 80197 / JCM 7670 / NBRC 15755 / NCIMB 13165 / 161).